Reading from the N-terminus, the 211-residue chain is SsrA-binding protein (211 aa).

2 disordered regions span residues 1 to 20 (MHRR…PERS) and 170 to 211 (RLRR…RHEN). Residues 177-187 (QRNTQRSVTPR) show a composition bias toward polar residues.

Belongs to the SmpB family.

Its subcellular location is the cytoplasm. In terms of biological role, required for rescue of stalled ribosomes mediated by trans-translation. Binds to transfer-messenger RNA (tmRNA), required for stable association of tmRNA with ribosomes. tmRNA and SmpB together mimic tRNA shape, replacing the anticodon stem-loop with SmpB. tmRNA is encoded by the ssrA gene; the 2 termini fold to resemble tRNA(Ala) and it encodes a 'tag peptide', a short internal open reading frame. During trans-translation Ala-aminoacylated tmRNA acts like a tRNA, entering the A-site of stalled ribosomes, displacing the stalled mRNA. The ribosome then switches to translate the ORF on the tmRNA; the nascent peptide is terminated with the 'tag peptide' encoded by the tmRNA and targeted for degradation. The ribosome is freed to recommence translation, which seems to be the essential function of trans-translation. The chain is SsrA-binding protein from Tropheryma whipplei (strain TW08/27) (Whipple's bacillus).